Here is a 470-residue protein sequence, read N- to C-terminus: Ras-like GTPase HI_1637 (470 aa).

The Walker A motif signature appears at 27 to 34 (GLSRSGKT). GTP-binding residues include Ser-29, Gly-32, Lys-33, Thr-34, Ala-35, Trp-98, Ser-101, Thr-102, Arg-103, Lys-342, Asp-344, and His-345. 7 residues coordinate GDP: Gly-32, Lys-33, Thr-34, Ala-35, Trp-98, Ser-101, and Thr-102. Residues Lys-342, Asp-344, His-345, Ala-383, and Val-384 each contribute to the GDP site. Val-384 contacts GTP.

The protein to E.coli YcjX. Monomer in solution. Mg(2+) serves as cofactor.

It catalyses the reaction GTP + H2O = GDP + phosphate + H(+). Its activity is regulated as follows. Alternates between an inactive form bound to GDP and an active form bound to GTP. Likely activated by a guanine nucleotide-exchange factor (GEF). In terms of biological role, binds GTP and GDP. Has intrinsic GTPase activity. Does not hydrolyze ATP. May act as a transducer of stress responses. The chain is Ras-like GTPase HI_1637 from Haemophilus influenzae (strain ATCC 51907 / DSM 11121 / KW20 / Rd).